We begin with the raw amino-acid sequence, 419 residues long: Carboxypeptidase A1 (419 aa).

The N-terminal stretch at 1–16 (MKRLLVLSVLLAAVFG) is a signal peptide. A propeptide spans 17 to 110 (NENFVGHQVL…KQQMSAFQAR (94 aa)) (activation peptide). The 294-residue stretch at 121–414 (TYHTLDEIYE…LALLTIMDHT (294 aa)) folds into the Peptidase M14 domain. Positions 179 and 182 each coordinate Zn(2+). Residues 179 to 182 (HSRE), R237, and 254 to 255 (NR) contribute to the substrate site. A disulfide bond links C248 and C271. A Zn(2+)-binding site is contributed by H306. Substrate is bound by residues 307-308 (SY) and Y358. Residue E380 is the Proton donor/acceptor of the active site.

The protein belongs to the peptidase M14 family. Monomer. Zn(2+) serves as cofactor.

Its subcellular location is the secreted. The enzyme catalyses Release of a C-terminal amino acid, but little or no action with -Asp, -Glu, -Arg, -Lys or -Pro.. In terms of biological role, carboxypeptidase that catalyzes the release of a C-terminal amino acid, but has little or no action with -Asp, -Glu, -Arg, -Lys or -Pro. This chain is Carboxypeptidase A1 (Cpa1), found in Mus musculus (Mouse).